A 139-amino-acid polypeptide reads, in one-letter code: Putative pre-16S rRNA nuclease (139 aa).

The protein belongs to the YqgF nuclease family.

It localises to the cytoplasm. Its function is as follows. Could be a nuclease involved in processing of the 5'-end of pre-16S rRNA. The sequence is that of Putative pre-16S rRNA nuclease from Streptococcus suis (strain 98HAH33).